We begin with the raw amino-acid sequence, 232 residues long: 6-phosphogluconolactonase (232 aa).

Belongs to the glucosamine/galactosamine-6-phosphate isomerase family. 6-phosphogluconolactonase subfamily.

It carries out the reaction 6-phospho-D-glucono-1,5-lactone + H2O = 6-phospho-D-gluconate + H(+). It functions in the pathway carbohydrate degradation; pentose phosphate pathway; D-ribulose 5-phosphate from D-glucose 6-phosphate (oxidative stage): step 2/3. In terms of biological role, hydrolysis of 6-phosphogluconolactone to 6-phosphogluconate. The protein is 6-phosphogluconolactonase (pgl) of Rhizobium meliloti (strain 1021) (Ensifer meliloti).